The sequence spans 167 residues: Small ribosomal subunit protein uS5 (167 aa).

The 64-residue stretch at 11–74 (LQEKLIAVNR…EKARRAMINV (64 aa)) folds into the S5 DRBM domain.

It belongs to the universal ribosomal protein uS5 family. In terms of assembly, part of the 30S ribosomal subunit. Contacts proteins S4 and S8.

Its function is as follows. With S4 and S12 plays an important role in translational accuracy. In terms of biological role, located at the back of the 30S subunit body where it stabilizes the conformation of the head with respect to the body. The polypeptide is Small ribosomal subunit protein uS5 (Serratia proteamaculans (strain 568)).